Reading from the N-terminus, the 1607-residue chain is Abnormal cell migration protein 38 (1607 aa).

12 disordered regions span residues 14–52 (EFNK…SQDF), 67–93 (RLSP…QYHV), 167–222 (STSY…AAQA), 326–425 (GSSA…PPSQ), 459–478 (SPNT…GMDQ), 549–594 (MVHR…QHSY), 845–931 (YDEN…PETE), 1017–1061 (SVQV…DYDM), 1141–1241 (EPSP…VTPK), 1319–1378 (ETPN…KGQL), 1392–1445 (FANV…PQAV), and 1517–1607 (KVKT…STDP). Composition is skewed to polar residues over residues 81-93 (PGPS…QYHV) and 179-191 (PSGN…NHQQ). Positions 195–205 (VPQVQQQPAKP) are enriched in low complexity. The segment covering 206–218 (KTTKKRPPPKKKT) has biased composition (basic residues). The span at 327–341 (SSASSSAQPSQPAKK) shows a compositional bias: low complexity. 2 stretches are compositionally biased toward polar residues: residues 349–371 (VPNT…QITP) and 379–425 (PTTT…PPSQ). Residues 585 to 594 (NSHSQSQHSY) show a composition bias toward low complexity. The span at 858-871 (EEPESESESEPEAE) shows a compositional bias: acidic residues. 2 stretches are compositionally biased toward basic and acidic residues: residues 872–886 (PEPK…EPAR) and 907–917 (YRNESESTFDW). Composition is skewed to low complexity over residues 1333 to 1354 (PNIP…SVSV), 1395 to 1419 (VPSS…VSAK), and 1584 to 1601 (LLGT…SSGL).

Expressed in gonad distal tip cells and gonad sheath cells.

It localises to the nucleus. The protein localises to the cytoplasm. Its function is as follows. During gonad development, involved in distal tip cell (DTC) migration from the dorsal side of the hermaphrodite body to the midbody which allows for the formation of gonad arms. Role in gonad DTC migration may be in association with integrin related proteins ina-1 and mig-15. This chain is Abnormal cell migration protein 38, found in Caenorhabditis elegans.